The sequence spans 75 residues: YTLLCYKTPSPINAETCPPGENLCYTKMWCDAWCSSRGKVIELGCAATCPSKKPYEEVTCCSTDKCNPHPKQRPG.

The first 2 residues, 1–2 (YT), serve as a signal peptide directing secretion. Intrachain disulfides connect cysteine 5–cysteine 24, cysteine 17–cysteine 45, cysteine 30–cysteine 34, cysteine 49–cysteine 60, and cysteine 61–cysteine 66.

This sequence belongs to the three-finger toxin family. Long-chain subfamily. Type II alpha-neurotoxin sub-subfamily. Monomer in solution, homodimer in crystal state. Expressed by the venom gland.

Its subcellular location is the secreted. Functionally, binds to muscular and neuronal nicotinic acetylcholine receptor (nAChR) and inhibits acetylcholine from binding to the receptor, thereby impairing neuromuscular and neuronal transmission. Reversibly blocks chick and mouse muscle nicotinic acetylcholine receptors. Blocks muscle type nAChR with an IC(50)=30 nM, when heterologously expressed in oocytes. Also binds with high affinity to alpha-7/CHRNA7 nAChRs. In addition, shows a weak inhibition of neuronal alpha-3-beta-2/CHRNA3-CHRNB2 nAChR (IC(50)=2.9 uM). Selectively binds to alpha-1-delta subunit interface of the mouse muscle nicotinic acetylcholine receptor, with a 10-fold higher affinity for the adult than for the fetal receptors. In vivo, when intraperitoneally injected into mice, causes flaccid paralysis and respiratory distress, followed by death within 2-4 hours. In Bungarus candidus (Malayan krait), this protein is Alpha-elapitoxin-Bc2a.